A 367-amino-acid polypeptide reads, in one-letter code: Outer membrane protein P2 (367 aa).

An N-terminal signal peptide occupies residues 1 to 20; it reads MKKTLAALIVGAFAASAANA.

The protein belongs to the Gram-negative porin family. Homotrimer.

The protein resides in the cell outer membrane. In terms of biological role, forms pores that allow passive diffusion of small molecules across the outer membrane. This is Outer membrane protein P2 (ompP2) from Haemophilus influenzae.